A 136-amino-acid polypeptide reads, in one-letter code: Protein scalloped (136 aa).

It localises to the nucleus. Its function is as follows. Probable transcription factor that function in the regulation of cell-specific gene expression during drosophila development, particularly in the differentiation of the nervous system. This is Protein scalloped (SD) from Junonia coenia (Peacock butterfly).